The following is a 535-amino-acid chain: Serum response factor-binding protein 1 (535 aa).

Coiled-coil stretches lie at residues 5-27 and 107-177; these read LNLNNEVVKLRKDVKKVKVLIIR and LKQK…EKCK. Basic and acidic residues-rich tracts occupy residues 128 to 151, 159 to 191, 205 to 325, 361 to 376, 406 to 432, and 460 to 472; these read AAEGEREREKDEPEQVTKIKETKK, KNTEEIKSAKEHVKEEKCKNLLEDSDKGTEKAL, AENK…ERPV, DKEKEYFDDSTEERFY, SDKDGSKQKEEKVPPTKEKAQTSEVQK, and TKRETNFRQERNK. 2 disordered regions span residues 128-435 and 453-535; these read AAEG…KEIP and TKPK…VFDD.

Its subcellular location is the cytoplasm. The protein localises to the perinuclear region. Its function is as follows. May be involved in regulating transcriptional activation of cardiac genes during the aging process. May play a role in biosynthesis and/or processing of SLC2A4 in adipose cells. This Xenopus tropicalis (Western clawed frog) protein is Serum response factor-binding protein 1.